The sequence spans 194 residues: Inner membrane-spanning protein YciB (194 aa).

5 consecutive transmembrane segments (helical) span residues leucine 3–tyrosine 23, isoleucine 47–tyrosine 67, tryptophan 76–phenylalanine 96, leucine 119–phenylalanine 139, and phenylalanine 149–leucine 169.

Belongs to the YciB family.

The protein resides in the cell inner membrane. Its function is as follows. Plays a role in cell envelope biogenesis, maintenance of cell envelope integrity and membrane homeostasis. The polypeptide is Inner membrane-spanning protein YciB (Colwellia psychrerythraea (strain 34H / ATCC BAA-681) (Vibrio psychroerythus)).